The following is a 739-amino-acid chain: Phosphoribosylformylglycinamidine synthase subunit PurL (739 aa).

His-54 is a catalytic residue. Tyr-57 and Lys-96 together coordinate ATP. Glu-98 serves as a coordination point for Mg(2+). Substrate-binding positions include 99–102 and Arg-121; that span reads SHNH. His-100 functions as the Proton acceptor in the catalytic mechanism. Asp-122 serves as a coordination point for Mg(2+). Gln-245 is a binding site for substrate. Asp-273 contacts Mg(2+). 317–319 lines the substrate pocket; the sequence is ESQ. Positions 500 and 537 each coordinate ATP. Position 538 (Asn-538) interacts with Mg(2+). Ser-540 is a binding site for substrate.

Belongs to the FGAMS family. Monomer. Part of the FGAM synthase complex composed of 1 PurL, 1 PurQ and 2 PurS subunits.

The protein resides in the cytoplasm. The enzyme catalyses N(2)-formyl-N(1)-(5-phospho-beta-D-ribosyl)glycinamide + L-glutamine + ATP + H2O = 2-formamido-N(1)-(5-O-phospho-beta-D-ribosyl)acetamidine + L-glutamate + ADP + phosphate + H(+). Its pathway is purine metabolism; IMP biosynthesis via de novo pathway; 5-amino-1-(5-phospho-D-ribosyl)imidazole from N(2)-formyl-N(1)-(5-phospho-D-ribosyl)glycinamide: step 1/2. Part of the phosphoribosylformylglycinamidine synthase complex involved in the purines biosynthetic pathway. Catalyzes the ATP-dependent conversion of formylglycinamide ribonucleotide (FGAR) and glutamine to yield formylglycinamidine ribonucleotide (FGAM) and glutamate. The FGAM synthase complex is composed of three subunits. PurQ produces an ammonia molecule by converting glutamine to glutamate. PurL transfers the ammonia molecule to FGAR to form FGAM in an ATP-dependent manner. PurS interacts with PurQ and PurL and is thought to assist in the transfer of the ammonia molecule from PurQ to PurL. The sequence is that of Phosphoribosylformylglycinamidine synthase subunit PurL from Bacillus cereus (strain AH187).